We begin with the raw amino-acid sequence, 436 residues long: tRNA modification GTPase MnmE (436 aa).

(6S)-5-formyl-5,6,7,8-tetrahydrofolate-binding residues include Arg20, Glu77, and Lys117. One can recognise a TrmE-type G domain in the interval 214-360 (GLKIVIAGAP…FIKELESFCL (147 aa)). GTP contacts are provided by residues 224-229 (NSGKSS), 243-249 (MEEAGTT), and 268-271 (DTAG). The Mg(2+) site is built by Ser228 and Thr249. (6S)-5-formyl-5,6,7,8-tetrahydrofolate is bound at residue Lys436.

It belongs to the TRAFAC class TrmE-Era-EngA-EngB-Septin-like GTPase superfamily. TrmE GTPase family. As to quaternary structure, homodimer. Heterotetramer of two MnmE and two MnmG subunits. It depends on K(+) as a cofactor.

The protein localises to the cytoplasm. Exhibits a very high intrinsic GTPase hydrolysis rate. Involved in the addition of a carboxymethylaminomethyl (cmnm) group at the wobble position (U34) of certain tRNAs, forming tRNA-cmnm(5)s(2)U34. The chain is tRNA modification GTPase MnmE from Bartonella quintana (strain Toulouse) (Rochalimaea quintana).